Reading from the N-terminus, the 354-residue chain is Selenide, water dikinase (354 aa).

Cysteine 23 is an active-site residue. Residues lysine 26 and 54-56 (TSD) each bind ATP. Aspartate 57 is a binding site for Mg(2+). ATP-binding positions include aspartate 74, aspartate 97, and 145-147 (GHS). Aspartate 97 serves as a coordination point for Mg(2+). Aspartate 233 is a Mg(2+) binding site.

This sequence belongs to the selenophosphate synthase 1 family. Class I subfamily. Homodimer. Mg(2+) serves as cofactor.

The catalysed reaction is hydrogenselenide + ATP + H2O = selenophosphate + AMP + phosphate + 2 H(+). Synthesizes selenophosphate from selenide and ATP. The sequence is that of Selenide, water dikinase from Burkholderia cenocepacia (strain ATCC BAA-245 / DSM 16553 / LMG 16656 / NCTC 13227 / J2315 / CF5610) (Burkholderia cepacia (strain J2315)).